The primary structure comprises 803 residues: Volume-regulated anion channel subunit LRRC8C (803 aa).

The Cytoplasmic segment spans residues 1–22; that stretch reads MIPVTEFRQFSEQQPAFRVLKP. A helical membrane pass occupies residues 23–47; sequence WWDVFTDYLSVAMLMIGVFGCTLQV. The Extracellular segment spans residues 48 to 124; it reads MQDKIICLPK…CYERALHWYA (77 aa). 2 cysteine pairs are disulfide-bonded: Cys54–Cys308 and Cys115–Cys293. N-linked (GlcNAc...) asparagine glycosylation is found at Asn64 and Asn70. The chain crosses the membrane as a helical span at residues 125–144; the sequence is KYFPYLVLIHTLVFMLCSNF. The Cytoplasmic segment spans residues 145 to 262; the sequence is WFKFPGSSSK…EEGDILYAMY (118 aa). Positions 177-209 are disordered; that stretch reads EVSGEDSEEKDNRKNNMNRSNTIQSGPEDSLVN. Over residues 191–209 the composition is skewed to polar residues; sequence NNMNRSNTIQSGPEDSLVN. Phosphoserine is present on residues Ser212 and Ser215. Residues 263–284 form a helical membrane-spanning segment; sequence VRQTVLKVIKFLIIIAYNSALV. Topologically, residues 285–314 are extracellular; sequence SKVQFTVDCNVDIQDMTGYKNFSCNHTMAH. The helical transmembrane segment at 315-339 threads the bilayer; it reads LFSKLSFCYLCFVSIYGLTCLYTLY. Residues 340-803 are Cytoplasmic-facing; that stretch reads WLFYRSLREY…SDVREQMKTE (464 aa). LRR repeat units lie at residues 397-420, 421-443, 446-466, 467-488, 490-513, 515-537, 541-563, 565-587, 588-611, 613-635, 636-659, 660-682, 684-705, 706-728, 730-751, 753-774, and 776-799; these read ENKLKQLNLNNEWTPDKLRQKLQT, NAHNRLELPLIMLSGLPDTVFEI, LQSLKLEIIKNVMIPATIAQL, DNLQELSLHQCSVKIHSAALSF, KENLKVLSVKFDDMRELPPWMYGL, NLEELYLVGSLSHDISRNVTLES, LKSLKILSIKSNVSKIPQAVVDV, SHLQKMCIHNDGTKLVMLNNLKK, MTNLTELELVHCDLERIPHAVFSL, SLQELDLKENNLKSIEEIVSFQH, LRKLTVLKLWHNSITYIPEHIKKL, TSLERLSFSHNKIEVLPSHLFLC, KIRYLDLSYNDIRFIPPEIGVL, QSLQYFSITCNKVESLPDELYFC, KLKTLKIGKNSLSVLSPKIGNL, FLSYLDVKGNHFEILPPELGDC, and ALKRAGLVVEDALFETLPSDVREQ.

Belongs to the LRRC8 family. In terms of assembly, heterohexamer; oligomerizes with other LRRC8 proteins (LRRC8A, LRRC8B, LRRC8D and/or LRRC8E) to form a heterohexamer. Homoheptamer; inactive, likely because it is not targeted to the plasma membrane in the absence of LRRC8A. In vivo, the subunit composition may depend primarily on expression levels, and heterooligomeric channels containing various proportions of the different LRRC8 proteins may coexist. Expressed at highest levels in skeletal muscle, and at moderate levels in heart, lung and peripheral blood leukocytes.

It is found in the cell membrane. The protein localises to the endoplasmic reticulum membrane. It carries out the reaction chloride(in) = chloride(out). The catalysed reaction is iodide(out) = iodide(in). It catalyses the reaction taurine(out) = taurine(in). The enzyme catalyses 2',3'-cGAMP(out) = 2',3'-cGAMP(in). Functionally, non-essential component of the volume-regulated anion channel (VRAC, also named VSOAC channel), an anion channel required to maintain a constant cell volume in response to extracellular or intracellular osmotic changes. The VRAC channel conducts iodide better than chloride and can also conduct organic osmolytes like taurine. Plays a redundant role in the efflux of amino acids, such as aspartate and glutamate, in response to osmotic stress. The VRAC channel also mediates transport of immunoreactive cyclic dinucleotide GMP-AMP (2'-3'-cGAMP), an immune messenger produced in response to DNA virus in the cytosol. Channel activity requires LRRC8A plus at least one other family member (LRRC8B, LRRC8C, LRRC8D or LRRC8E); channel characteristics depend on the precise subunit composition. The polypeptide is Volume-regulated anion channel subunit LRRC8C (Homo sapiens (Human)).